We begin with the raw amino-acid sequence, 710 residues long: Polyribonucleotide nucleotidyltransferase (710 aa).

Mg(2+) is bound by residues Asp491 and Asp497. In terms of domain architecture, KH spans 559–618; the sequence is PRLITIKINPEKIRDVIGKGGAVIRALTEETGTQIDISDEGVVTIASVDAAAGQEAKRRI. Positions 628 to 696 constitute an S1 motif domain; that stretch reads GKVYEGTVLK…DRGRLKLSMK (69 aa).

It belongs to the polyribonucleotide nucleotidyltransferase family. Mg(2+) is required as a cofactor.

Its subcellular location is the cytoplasm. It carries out the reaction RNA(n+1) + phosphate = RNA(n) + a ribonucleoside 5'-diphosphate. Its function is as follows. Involved in mRNA degradation. Catalyzes the phosphorolysis of single-stranded polyribonucleotides processively in the 3'- to 5'-direction. This is Polyribonucleotide nucleotidyltransferase from Herminiimonas arsenicoxydans.